The sequence spans 175 residues: Adenylate kinase isoenzyme 6 homolog (175 aa).

Positions 17, 19, 20, 21, and 22 each coordinate ATP. The interval Asp-37–Leu-60 is NMPbind. The tract at residues Lys-112–Asn-122 is LID. An ATP-binding site is contributed by Arg-113.

The protein belongs to the adenylate kinase family. AK6 subfamily. Monomer and homodimer. Interacts with small ribosomal subunit protein uS11. Not a structural component of 43S pre-ribosomes, but transiently interacts with them by binding to uS11.

Its subcellular location is the cytoplasm. It localises to the nucleus. The catalysed reaction is AMP + ATP = 2 ADP. The enzyme catalyses ATP + H2O = ADP + phosphate + H(+). In terms of biological role, broad-specificity nucleoside monophosphate (NMP) kinase that catalyzes the reversible transfer of the terminal phosphate group between nucleoside triphosphates and monophosphates. Also has ATPase activity. Involved in the late cytoplasmic maturation steps of the 40S ribosomal particles, specifically 18S rRNA maturation. While NMP activity is not required for ribosome maturation, ATPase activity is. Associates transiently with small ribosomal subunit protein uS11. ATP hydrolysis breaks the interaction with uS11. May temporarily remove uS11 from the ribosome to enable a conformational change of the ribosomal RNA that is needed for the final maturation step of the small ribosomal subunit. Its NMP activity may have a role in nuclear energy homeostasis. This is Adenylate kinase isoenzyme 6 homolog from Dictyostelium discoideum (Social amoeba).